We begin with the raw amino-acid sequence, 130 residues long: uncharacterized protein (130 aa).

Residues 1–18 form the signal peptide; the sequence is MVEVWWSLIGAAVPALIA.

This is an uncharacterized protein from Arabidopsis thaliana (Mouse-ear cress).